The sequence spans 78 residues: DNA-directed RNA polymerase subunit omega (78 aa).

It belongs to the RNA polymerase subunit omega family. In cyanobacteria the RNAP catalytic core is composed of 2 alpha, 1 beta, 1 beta', 1 gamma and 1 omega subunit. When a sigma factor is associated with the core the holoenzyme is formed, which can initiate transcription.

The enzyme catalyses RNA(n) + a ribonucleoside 5'-triphosphate = RNA(n+1) + diphosphate. Promotes RNA polymerase assembly. Latches the N- and C-terminal regions of the beta' subunit thereby facilitating its interaction with the beta and alpha subunits. The sequence is that of DNA-directed RNA polymerase subunit omega from Nostoc punctiforme (strain ATCC 29133 / PCC 73102).